The sequence spans 391 residues: 8-amino-7-oxononanoate synthase (391 aa).

Arg-20 is a substrate binding site. Residue 106-107 coordinates pyridoxal 5'-phosphate; the sequence is GY. His-131 is a binding site for substrate. Residues Ser-178, His-206, and Thr-234 each coordinate pyridoxal 5'-phosphate. At Lys-237 the chain carries N6-(pyridoxal phosphate)lysine. Thr-353 lines the substrate pocket.

Belongs to the class-II pyridoxal-phosphate-dependent aminotransferase family. BioF subfamily. Homodimer. Pyridoxal 5'-phosphate is required as a cofactor.

The enzyme catalyses 6-carboxyhexanoyl-[ACP] + L-alanine + H(+) = (8S)-8-amino-7-oxononanoate + holo-[ACP] + CO2. The protein operates within cofactor biosynthesis; biotin biosynthesis. In terms of biological role, catalyzes the decarboxylative condensation of pimeloyl-[acyl-carrier protein] and L-alanine to produce 8-amino-7-oxononanoate (AON), [acyl-carrier protein], and carbon dioxide. The protein is 8-amino-7-oxononanoate synthase of Trichlorobacter lovleyi (strain ATCC BAA-1151 / DSM 17278 / SZ) (Geobacter lovleyi).